Reading from the N-terminus, the 941-residue chain is Translation initiation factor IF-2 (941 aa).

Disordered stretches follow at residues 61-204 (IQSN…RREN) and 249-274 (QEKD…KNNK). Positions 147-163 (EKAKQKLQEIQKSREAL) are enriched in basic and acidic residues. The span at 164–179 (NKLTQSNTNNANNANS) shows a compositional bias: low complexity. Over residues 180 to 204 (AKKEISEVAKQEREQEHLDNKRREN) the composition is skewed to basic and acidic residues. Residues 440 to 609 (ERPPVVTIMG…LIQADIMELK (170 aa)) enclose the tr-type G domain. The segment at 449–456 (GHVDHGKT) is G1. 449-456 (GHVDHGKT) is a binding site for GTP. The tract at residues 474–478 (GITQH) is G2. The G3 stretch occupies residues 495-498 (DTPG). Residues 495–499 (DTPGH) and 549–552 (NKMD) each bind GTP. The interval 549 to 552 (NKMD) is G4. Residues 585–587 (SAK) form a G5 region.

It belongs to the TRAFAC class translation factor GTPase superfamily. Classic translation factor GTPase family. IF-2 subfamily.

It localises to the cytoplasm. Its function is as follows. One of the essential components for the initiation of protein synthesis. Protects formylmethionyl-tRNA from spontaneous hydrolysis and promotes its binding to the 30S ribosomal subunits. Also involved in the hydrolysis of GTP during the formation of the 70S ribosomal complex. This Helicobacter acinonychis (strain Sheeba) protein is Translation initiation factor IF-2.